The primary structure comprises 545 residues: Methionine--tRNA ligase (545 aa).

The short motif at 13–23 is the 'HIGH' region element; sequence PYANGEIHLGH. Zn(2+)-binding residues include cysteine 144, cysteine 147, cysteine 157, and cysteine 160. The 'KMSKS' region motif lies at 329–333; sequence KMSKS. ATP is bound at residue lysine 332.

Belongs to the class-I aminoacyl-tRNA synthetase family. MetG type 1 subfamily. In terms of assembly, monomer. Zn(2+) serves as cofactor.

It localises to the cytoplasm. The enzyme catalyses tRNA(Met) + L-methionine + ATP = L-methionyl-tRNA(Met) + AMP + diphosphate. Functionally, is required not only for elongation of protein synthesis but also for the initiation of all mRNA translation through initiator tRNA(fMet) aminoacylation. This is Methionine--tRNA ligase from Vesicomyosocius okutanii subsp. Calyptogena okutanii (strain HA).